We begin with the raw amino-acid sequence, 253 residues long: 5-oxoprolinase subunit A (253 aa).

The protein belongs to the LamB/PxpA family. In terms of assembly, forms a complex composed of PxpA, PxpB and PxpC.

The enzyme catalyses 5-oxo-L-proline + ATP + 2 H2O = L-glutamate + ADP + phosphate + H(+). In terms of biological role, catalyzes the cleavage of 5-oxoproline to form L-glutamate coupled to the hydrolysis of ATP to ADP and inorganic phosphate. The sequence is that of 5-oxoprolinase subunit A from Ruegeria pomeroyi (strain ATCC 700808 / DSM 15171 / DSS-3) (Silicibacter pomeroyi).